Reading from the N-terminus, the 349-residue chain is 26S proteasome non-ATPase regulatory subunit 4 (349 aa).

The VWFA domain maps to 5-188; sequence ATIVCLDNSE…LSDIILQSPI (184 aa). The UIM 1 domain occupies 204 to 223; the sequence is DTDPDLAMALKLSLEEEKQR. Over residues 219 to 234 the composition is skewed to basic and acidic residues; it reads EEKQRQERERKAREEA. Disordered regions lie at residues 219-257 and 274-349; these read EEKQ…MDVN and TDKM…NEKK. The segment covering 235-253 has biased composition (low complexity); that stretch reads NGGSTNSGTTTTTAPTESN. The 20-residue stretch at 259-278 folds into the UIM 2 domain; the sequence is EDDPELAEALALSMATDKME. Positions 280 to 301 are enriched in low complexity; it reads QSSTTNTDSQPPQQQQQPPTDD. A compositionally biased stretch (basic and acidic residues) spans 335-349; the sequence is LSKKDEDKDKDNEKK.

It belongs to the proteasome subunit S5A family. As to quaternary structure, the 26S proteasome is composed of a core protease, known as the 20S proteasome, capped at one or both ends by the 19S regulatory complex (RC). The RC is composed of at least 18 different subunits in two subcomplexes, the base and the lid, which form the portions proximal and distal to the 20S proteolytic core, respectively.

Its function is as follows. Binds and presumably selects ubiquitin-conjugates for destruction. This chain is 26S proteasome non-ATPase regulatory subunit 4 (psmD4), found in Dictyostelium discoideum (Social amoeba).